A 69-amino-acid chain; its full sequence is Putative transmembrane protein ORF34 (69 aa).

The next 2 membrane-spanning stretches (helical) occupy residues 7–27 and 42–62; these read LLSVLAIIFYGVMVVGSMMQF and VSLMLVGICAVVCFYASIVYF.

It localises to the host membrane. The polypeptide is Putative transmembrane protein ORF34 (Haloarcula hispanica (His1V)).